We begin with the raw amino-acid sequence, 149 residues long: UPF0260 protein RCAP_rcc02083 (149 aa).

Belongs to the UPF0260 family.

In Rhodobacter capsulatus (strain ATCC BAA-309 / NBRC 16581 / SB1003), this protein is UPF0260 protein RCAP_rcc02083.